The following is a 97-amino-acid chain: Secreted transmembrane peptide 4 (97 aa).

Residues 1–33 (MTKNMTKKKMGLMSPNIAAFVLPMLLVLFTISS) form the signal peptide. Residues 54–67 (IVFTPPSSSCGGSP) carry the SCOOP motif motif. The SxS motif essential for MIK2 binding signature appears at 60–62 (SSS). Residues 75–97 (WMPRRPCRRTRPPGTNIPVSQSP) are disordered.

Belongs to the serine rich endogenous peptide (SCOOP) phytocytokine family. As to quaternary structure, interacts with MIK2 (via extracellular leucine-rich repeat domain); this interaction triggers the formation of complex between MIK2 and the BAK1/SERK3 and SERK4 coreceptors, and subsequent BAK1 activation by phosphorylation. Mostly expressed in leaves and stems, and, to a lower extent, in roots, siliques, seeds and flowers.

It is found in the cell membrane. Its subcellular location is the secreted. It localises to the extracellular space. The protein resides in the apoplast. Its function is as follows. Brassicaceae-specific phytocytokine (plant endogenous peptide released into the apoplast) perceived by MIK2 in a BAK1/SERK3 and SERK4 coreceptors-dependent manner, that modulates various physiological and antimicrobial processes including growth prevention and reactive oxygen species (ROS) response regulation. Prevents general growth and development. The chain is Secreted transmembrane peptide 4 from Arabidopsis thaliana (Mouse-ear cress).